The sequence spans 643 residues: Nucleolar GTP-binding protein 1 (643 aa).

Residues 168-340 (RTLLICGYPN…VRNKACEKLL (173 aa)) enclose the OBG-type G domain. Residues 174 to 181 (GYPNVGKS), 220 to 224 (DTPGI), and 288 to 291 (NKTD) contribute to the GTP site. The disordered stretch occupies residues 568–643 (GDQEDSAPAG…KRGVGKTDFR (76 aa)). A compositionally biased stretch (basic and acidic residues) spans 594 to 622 (MRSKAERMAKLERRERNRMARAGESDRHA).

This sequence belongs to the TRAFAC class OBG-HflX-like GTPase superfamily. OBG GTPase family. NOG subfamily.

It is found in the nucleus. It localises to the nucleolus. In terms of biological role, involved in the biogenesis of the 60S ribosomal subunit. In Kluyveromyces lactis (strain ATCC 8585 / CBS 2359 / DSM 70799 / NBRC 1267 / NRRL Y-1140 / WM37) (Yeast), this protein is Nucleolar GTP-binding protein 1 (NOG1).